Here is an 823-residue protein sequence, read N- to C-terminus: MSLRSLLITTEAVGETTQTSDHQTSFSTRTYNEINDRPSLRIEKDGEKAYCFKNLDPVRYDTRMGEYPFDYGGQSTENNQLQFDLFTKDLKADTDIDLSDDVKDDLKRQIMEYYQQGYRAIFLVRPQNQEQHYIASYSSTNLNFTSQPSIGVNLSILNKIQENKLYIYSTQPHIPSVGCEMIAKIFRTDIDNENSLINYSAPVTVTISVTKATFGDTFVCNHPNMNYQDLIPTMTKNSIYHDVKRITKIHEYINSKKKKKNSTSKIGGIQIAESKDGFWKILTKNYQIKLKFGVEGYGVMGGTFGNWLIDSGFKTVETNYEYQRNGKTINATTVASVKPSRKCGTRSPVFGQLQFSGEMMVLSHNDILTVFYTEREWALSNAIYAKNFATDFKRQFEITAQSDELLVRTNVVPHTIKNTPGKALMEYSHGGFGQIDTSDYTGMALTFRFRCISEDLPEGYYDRDKALAFANVGLTSFQDRQEANGTYWVYNTSTVGFGSCYPKKEFEYDINVTYTTLLPSDPEFTTGGTNYAQSVTAVLEESFINLQNQVNEMLTRMNISDLTSGVMSVFSVATSFPQILDGISDLLKAASSAFKKVKGKVGSVAKRLRGKRYVRLFDENVSIEETPRFLDSIRSSRRPSILSNMFNDDETFTALHTLASRTNSVASDVTYLQPIITTRIANSTPPVIAPASSVTYAKLKDISKIINAEIDPKSIMEFNQISNTISILDSTKKLAQYAVDPDIIDGILNKMVGGHARSLFSLKVRKHLLDAVEKDAFVKYNYHDLMGKLLNDRELLDITNNLSSQKQFELAKEFRDLLINALA.

Belongs to the rotavirus VP4 family. In terms of assembly, homotrimer. VP4 adopts a dimeric appearance above the capsid surface, while forming a trimeric base anchored inside the capsid layer. Only hints of the third molecule are observed above the capsid surface. It probably performs a series of molecular rearrangements during viral entry. Prior to trypsin cleavage, it is flexible. The priming trypsin cleavage triggers its rearrangement into rigid spikes with approximate two-fold symmetry of their protruding parts. After an unknown second triggering event, cleaved VP4 may undergo another rearrangement, in which two VP5* subunits fold back on themselves and join a third subunit to form a tightly associated trimer, shaped like a folded umbrella. Interacts with VP6. Interacts with VP7. Homotrimer. The trimer is coiled-coil stabilized by its C-terminus, however, its N-terminus, known as antigen domain or 'body', seems to be flexible allowing it to self-associate either as a dimer or a trimer. Post-translationally, proteolytic cleavage by trypsin results in activation of VP4 functions and greatly increases infectivity. The penetration into the host cell is dependent on trypsin treatment of VP4. It produces two peptides, VP5* and VP8* that remain associated with the virion. Cleavage of VP4 by trypsin probably occurs in vivo in the lumen of the intestine prior to infection of enterocytes. Trypsin seems to be incorporated into the three-layered viral particles but remains inactive as long as the viral outer capsid is intact and would only be activated upon the solubilization of the latter.

The protein localises to the virion. The protein resides in the host rough endoplasmic reticulum. It is found in the host cell membrane. Its subcellular location is the host endoplasmic reticulum-Golgi intermediate compartment. Its function is as follows. Spike-forming protein that mediates virion attachment to the host epithelial cell receptors and plays a major role in cell penetration, determination of host range restriction and virulence. Rotavirus attachment and entry into the host cell probably involves multiple sequential contacts between the outer capsid proteins VP4 and VP7, and the cell receptors. It is subsequently lost, together with VP7, following virus entry into the host cell. Following entry into the host cell, low intracellular or intravesicular Ca(2+) concentration probably causes the calcium-stabilized VP7 trimers to dissociate from the virion. This step is probably necessary for the membrane-disrupting entry step and the release of VP4, which is locked onto the virion by VP7. Forms the spike 'foot' and 'body' and acts as a membrane permeabilization protein that mediates release of viral particles from endosomal compartments into the cytoplasm. During entry, the part of VP5* that protrudes from the virus folds back on itself and reorganizes from a local dimer to a trimer. This reorganization may be linked to membrane penetration. Functionally, forms the head of the spikes and mediates the recognition of specific host cell surface glycans. It is the viral hemagglutinin and an important target of neutralizing antibodies. The sequence is that of Outer capsid protein VP4 from Rotavirus X (strain RVX/Human/China/NADRV-J19/1997/GXP[X]) (RV ADRV-N).